The sequence spans 966 residues: Catenin alpha-2 (966 aa).

The segment covering 924 to 940 (PEKKPLVKREKPEEYQT) has biased composition (basic and acidic residues). The segment at 924–952 (PEKKPLVKREKPEEYQTRVRRGSQKKHIS) is disordered. The segment covering 941–951 (RVRRGSQKKHI) has biased composition (basic residues).

It belongs to the vinculin/alpha-catenin family.

The protein localises to the cell membrane. It is found in the cytoplasm. It localises to the cytoskeleton. Its subcellular location is the cell junction. The protein resides in the adherens junction. The protein localises to the cell projection. It is found in the axon. It localises to the nucleus. Functionally, may function as a linker between cadherin adhesion receptors and the cytoskeleton to regulate cell-cell adhesion and differentiation in the nervous system. In Xenopus tropicalis (Western clawed frog), this protein is Catenin alpha-2 (ctnna2).